Consider the following 176-residue polypeptide: Large ribosomal subunit protein uL6 (176 aa).

Belongs to the universal ribosomal protein uL6 family. In terms of assembly, part of the 50S ribosomal subunit.

Its function is as follows. This protein binds to the 23S rRNA, and is important in its secondary structure. It is located near the subunit interface in the base of the L7/L12 stalk, and near the tRNA binding site of the peptidyltransferase center. In Paraburkholderia xenovorans (strain LB400), this protein is Large ribosomal subunit protein uL6.